The sequence spans 479 residues: UDP-glycosyltransferase 71B6 (479 aa).

Residues S275, 342–344 (AEQ), 359–367 (HGGWNSTLE), and 381–384 (YAEQ) each bind UDP-alpha-D-glucose.

Belongs to the UDP-glycosyltransferase family.

In terms of biological role, glucosyltransferase that glucosylates the (+) enantiomer of abscisic acid ((+)-ABA). Is not active on structural analogs with alterations to the 8'- and 9'- methyl groups. This Arabidopsis thaliana (Mouse-ear cress) protein is UDP-glycosyltransferase 71B6 (UGT71B6).